A 213-amino-acid polypeptide reads, in one-letter code: Transcription antitermination protein NusB (213 aa).

Belongs to the NusB family.

Functionally, involved in transcription antitermination. Required for transcription of ribosomal RNA (rRNA) genes. Binds specifically to the boxA antiterminator sequence of the ribosomal RNA (rrn) operons. This is Transcription antitermination protein NusB from Nostoc punctiforme (strain ATCC 29133 / PCC 73102).